Here is a 256-residue protein sequence, read N- to C-terminus: Small ribosomal subunit protein bS18m (256 aa).

A disordered region spans residues 19 to 106; sequence GQRTAQFSTT…GGQRYGSNSQ (88 aa). Over residues 21 to 30 the composition is skewed to polar residues; that stretch reads RTAQFSTTSP. Residues 44-66 are compositionally biased toward low complexity; sequence NAPRTNTNTSSPSSNNNNNAGSS.

This sequence belongs to the bacterial ribosomal protein bS18 family. Component of the mitochondrial small ribosomal subunit (mt-SSU). Mature N.crassa 74S mitochondrial ribosomes consist of a small (37S) and a large (54S) subunit. The 37S small subunit contains a 16S ribosomal RNA (16S mt-rRNA) and 32 different proteins. The 54S large subunit contains a 23S rRNA (23S mt-rRNA) and 42 different proteins.

The protein localises to the mitochondrion. Its function is as follows. Component of the mitochondrial ribosome (mitoribosome), a dedicated translation machinery responsible for the synthesis of mitochondrial genome-encoded proteins, including at least some of the essential transmembrane subunits of the mitochondrial respiratory chain. The mitoribosomes are attached to the mitochondrial inner membrane and translation products are cotranslationally integrated into the membrane. This chain is Small ribosomal subunit protein bS18m (rsm18), found in Neurospora crassa (strain ATCC 24698 / 74-OR23-1A / CBS 708.71 / DSM 1257 / FGSC 987).